A 213-amino-acid polypeptide reads, in one-letter code: NDR1/HIN1-like protein 26 (213 aa).

Residues 1-27 (MSQISITSPKHCAKKGGININNRHKKL) are Cytoplasmic-facing. A helical transmembrane segment spans residues 28–48 (FFTFSTFFSGLLLIIFLVWLI). The Lumenal segment spans residues 49–213 (LHPERPEFSL…LQGTRCSTTI (165 aa)). Asn67, Asn77, and Asn195 each carry an N-linked (GlcNAc...) asparagine glycan.

As to expression, expressed in the vasculature of roots, rosette leaves, stems, cauline leaves and flowers. Specifically expressed in phloem.

Its subcellular location is the cell junction. It is found in the plasmodesma. The protein localises to the endoplasmic reticulum membrane. Its function is as follows. Involved in the regulation of sugar, amino acid and some primary metabolite export from companion cells (CCs) to sieve elements (SEs) in phloem. Required for apoplastic phloem sugar loading in source leaves in order to transport it to sink tissues. Required for correct sugar partitioning between source leaves and sink organs. In Arabidopsis thaliana (Mouse-ear cress), this protein is NDR1/HIN1-like protein 26.